We begin with the raw amino-acid sequence, 164 residues long: ATP synthase subunit b (164 aa).

The helical transmembrane segment at 4–24 (IHFDLTLVVQVLSFLLLVYIL) threads the bilayer.

This sequence belongs to the ATPase B chain family. In terms of assembly, F-type ATPases have 2 components, F(1) - the catalytic core - and F(0) - the membrane proton channel. F(1) has five subunits: alpha(3), beta(3), gamma(1), delta(1), epsilon(1). F(0) has three main subunits: a(1), b(2) and c(10-14). The alpha and beta chains form an alternating ring which encloses part of the gamma chain. F(1) is attached to F(0) by a central stalk formed by the gamma and epsilon chains, while a peripheral stalk is formed by the delta and b chains.

Its subcellular location is the cell membrane. Functionally, f(1)F(0) ATP synthase produces ATP from ADP in the presence of a proton or sodium gradient. F-type ATPases consist of two structural domains, F(1) containing the extramembraneous catalytic core and F(0) containing the membrane proton channel, linked together by a central stalk and a peripheral stalk. During catalysis, ATP synthesis in the catalytic domain of F(1) is coupled via a rotary mechanism of the central stalk subunits to proton translocation. Component of the F(0) channel, it forms part of the peripheral stalk, linking F(1) to F(0). The chain is ATP synthase subunit b from Desulfitobacterium hafniense (strain Y51).